Reading from the N-terminus, the 302-residue chain is Nucleotide-binding protein Rsph17025_2562 (302 aa).

An ATP-binding site is contributed by 15 to 22 (GPSGAGRT). 62-65 (DVRN) contributes to the GTP binding site.

It belongs to the RapZ-like family.

In terms of biological role, displays ATPase and GTPase activities. This is Nucleotide-binding protein Rsph17025_2562 from Cereibacter sphaeroides (strain ATCC 17025 / ATH 2.4.3) (Rhodobacter sphaeroides).